Here is a 129-residue protein sequence, read N- to C-terminus: uncharacterized protein (129 aa).

The segment covering 1 to 13 (MSDVAETVVAQEP) has biased composition (low complexity). The tract at residues 1 to 129 (MSDVAETVVA…SGDAPAVAAE (129 aa)) is disordered. The segment covering 34-94 (IDEKTSEQNG…KRVSSAHEEA (61 aa)) has biased composition (basic and acidic residues). A compositionally biased stretch (low complexity) spans 117–129 (VAASGDAPAVAAE).

This is an uncharacterized protein from Caenorhabditis elegans.